The chain runs to 321 residues: MKLLALLSLLILMLQEARTASLSEEREGDPYAILHLGDYVLSLDNYDEVIDPSNYDELIDYGDQLPQVKGTSLASLTRTRFTQSTEAARTLPSNPTTARPPTLGLLAAPANHGLPTCLICVCLGSSVYCDDADLENIPPLPQTTAYLYARFNRISHIRAGDFKGLTKLKRIDLSGNSISSIDDKALRLLPALRDLILPENKLVALPTLPTSIEVLDVRMNRLQSSGIQPEAFRALEKLQFLYLADNLLDAIPPSLPLSLRSLHLQNNMIETMQRDAFCDAEEHRHTRRPLEDIRLDGNPINLSLFPSAYFCLPRLPTGRFV.

Residues 1 to 19 (MKLLALLSLLILMLQEART) form the signal peptide. At Y61 the chain carries Sulfotyrosine. The region spanning 105-142 (LLAAPANHGLPTCLICVCLGSSVYCDDADLENIPPLPQ) is the LRRNT domain. 6 LRR repeats span residues 143-164 (TTAY…DFKG), 167-188 (KLKR…ALRL), 191-212 (ALRD…PTSI), 237-258 (KLQF…LPLS), 259-279 (LRSL…AFCD), and 289-309 (PLED…PSAY). A disulfide bridge connects residues C278 and C311. N301 carries an N-linked (GlcNAc...) asparagine glycan.

It belongs to the small leucine-rich proteoglycan (SLRP) family. SLRP class III subfamily. In terms of assembly, homodimer. In terms of processing, O-glycosylated (sialylated oligosaccharides). Sulfated on tyrosine residues. Post-translationally, proteolytically cleaved by MMP1, MMP2, MMP3, MMP7, MMP8, MMP9, ADAMTS4, and ADAMTS5. Proteolytically cleaved by MMP13.

It localises to the secreted. Its subcellular location is the extracellular space. The protein localises to the extracellular matrix. Its function is as follows. Inhibits angiogenesis in the vitreous humor of the eye, and therefore represses neovascularization. Binds collagen fibrils. May be involved in collagen fiber organization via regulation of other members of the small leucine-rich repeat proteoglycan superfamily. The polypeptide is Opticin (OPTC) (Bos taurus (Bovine)).